Reading from the N-terminus, the 352-residue chain is Phosphoribosylformylglycinamidine cyclo-ligase (352 aa).

This sequence belongs to the AIR synthase family.

It localises to the cytoplasm. The catalysed reaction is 2-formamido-N(1)-(5-O-phospho-beta-D-ribosyl)acetamidine + ATP = 5-amino-1-(5-phospho-beta-D-ribosyl)imidazole + ADP + phosphate + H(+). It participates in purine metabolism; IMP biosynthesis via de novo pathway; 5-amino-1-(5-phospho-D-ribosyl)imidazole from N(2)-formyl-N(1)-(5-phospho-D-ribosyl)glycinamide: step 2/2. The polypeptide is Phosphoribosylformylglycinamidine cyclo-ligase (Pseudomonas fluorescens (strain ATCC BAA-477 / NRRL B-23932 / Pf-5)).